We begin with the raw amino-acid sequence, 172 residues long: Peptidyl-prolyl cis-trans isomerase (172 aa).

Positions 7–170 (FFDMAIAGNP…RPVTIADCGQ (164 aa)) constitute a PPIase cyclophilin-type domain.

The protein belongs to the cyclophilin-type PPIase family. Expressed in meristematic tissues, with higher levels in nodules.

Its subcellular location is the cytoplasm. It catalyses the reaction [protein]-peptidylproline (omega=180) = [protein]-peptidylproline (omega=0). Binds cyclosporin A (CsA). CsA mediates some of its effects via an inhibitory action on PPIase. PPIases accelerate the folding of proteins. It catalyzes the cis-trans isomerization of proline imidic peptide bonds in oligopeptides. The protein is Peptidyl-prolyl cis-trans isomerase of Lupinus luteus (European yellow lupine).